The chain runs to 1704 residues: Phospholipid-transporting ATPase ABCA3 (1704 aa).

Asn-14 carries an N-linked (GlcNAc...) asparagine glycan. The helical transmembrane segment at 22–42 (VLVTVLELFLPLLFSGILIWL) threads the bilayer. 4 N-linked (GlcNAc...) asparagine glycosylation sites follow: Asn-53, Asn-124, Asn-140, and Asn-228. 6 helical membrane passes run 261–283 (YQLP…RAVV), 307–327 (AWFL…TLLF), 344–364 (SLVL…SFMV), 373–393 (IAAA…FFVA), 405–425 (LLSC…IGKF), and 447–467 (FCFG…GLVT). An ABC transporter 1 domain is found at 530-763 (IKIKHLSKVF…YGAGYHMTLV (234 aa)). 566 to 573 (GHNGAGKT) is a binding site for ATP. N-linked (GlcNAc...) asparagine glycosylation occurs at Asn-620. 7 helical membrane passes run 925–945 (MVAA…LAIH), 1100–1120 (IALN…ILAV), 1144–1164 (SALL…LVVF), 1183–1203 (LLLM…SFFF), 1213–1233 (LTIF…IMRI), 1245–1265 (LDHV…SNFY), and 1310–1330 (MAAS…NLLW). Asn-1350 is a glycosylation site (N-linked (GlcNAc...) asparagine). The 234-residue stretch at 1381–1614 (LIINELSKVY…FGSGYSLQAK (234 aa)) folds into the ABC transporter 2 domain. 1416 to 1423 (GFNGAGKT) is a binding site for ATP.

This sequence belongs to the ABC transporter superfamily. ABCA family. As to quaternary structure, homooligomer; disulfide-linked. Post-translationally, N-glycosylated. Localization at intracellular vesicles is accompanied by processing of oligosaccharide from high mannose type to complex type. N-linked glycosylation at Asn-124 and Asn-140 is required for stability and efficient anterograde trafficking and prevents from proteasomal degradation. In terms of processing, proteolytically cleaved by CTSL and to a lower extent by CTSB within multivesicular bodies (MVB) and lamellar bodies (LB) leading to a mature form of 150 kDa. As to expression, highly expressed in the lung and moderately expressed in the kidney, adipose, macrophage, and spleen.

The protein localises to the endosome. The protein resides in the multivesicular body membrane. Its subcellular location is the cytoplasmic vesicle membrane. It localises to the late endosome membrane. It is found in the lysosome membrane. The enzyme catalyses a 1,2-diacyl-sn-glycero-3-phospho-(1'-sn-glycerol)(in) + ATP + H2O = a 1,2-diacyl-sn-glycero-3-phospho-(1'-sn-glycerol)(out) + ADP + phosphate + H(+). It carries out the reaction a 1,2-diacyl-sn-glycero-3-phosphocholine(in) + ATP + H2O = a 1,2-diacyl-sn-glycero-3-phosphocholine(out) + ADP + phosphate + H(+). The catalysed reaction is ATP + H2O + phospholipidSide 1 = ADP + phosphate + phospholipidSide 2.. It catalyses the reaction ATP + H2O + xenobioticSide 1 = ADP + phosphate + xenobioticSide 2.. The enzyme catalyses 1,2-dihexadecanoyl-sn-glycero-3-phosphocholine(in) + ATP + H2O = 1,2-dihexadecanoyl-sn-glycero-3-phosphocholine(out) + ADP + phosphate + H(+). It carries out the reaction cholesterol(in) + ATP + H2O = cholesterol(out) + ADP + phosphate + H(+). Its function is as follows. Catalyzes the ATP-dependent transport of phospholipids such as phosphatidylcholine and phosphoglycerol from the cytoplasm into the lumen side of lamellar bodies, in turn participates in the lamellar bodies biogenesis and homeostasis of pulmonary surfactant. Transports preferentially phosphatidylcholine containing short acyl chains. In addition plays a role as an efflux transporter of miltefosine across macrophage membranes and free cholesterol (FC) through intralumenal vesicles by removing FC from the cell as a component of surfactant and protects cells from free cholesterol toxicity. The polypeptide is Phospholipid-transporting ATPase ABCA3 (Abca3) (Mus musculus (Mouse)).